Consider the following 845-residue polypeptide: Translation initiation factor IF-2 (845 aa).

Composition is skewed to basic and acidic residues over residues 139 to 198 (EAKR…EKPA) and 206 to 228 (FRSE…KELH). Residues 139-253 (EAKRQAAEEE…PQKAAPAAKH (115 aa)) form a disordered region. The region spanning 345 to 512 (SRAAVVTIMG…AILLQAEVME (168 aa)) is the tr-type G domain. The tract at residues 354–361 (GHVDHGKT) is G1. 354–361 (GHVDHGKT) is a GTP binding site. Residues 379 to 383 (GITQH) form a G2 region. The G3 stretch occupies residues 400 to 403 (DTPG). GTP is bound by residues 400–404 (DTPGH) and 454–457 (NKID). The segment at 454 to 457 (NKID) is G4. Residues 490–492 (SAK) form a G5 region.

It belongs to the TRAFAC class translation factor GTPase superfamily. Classic translation factor GTPase family. IF-2 subfamily.

The protein localises to the cytoplasm. Its function is as follows. One of the essential components for the initiation of protein synthesis. Protects formylmethionyl-tRNA from spontaneous hydrolysis and promotes its binding to the 30S ribosomal subunits. Also involved in the hydrolysis of GTP during the formation of the 70S ribosomal complex. The protein is Translation initiation factor IF-2 of Nitrosococcus oceani (strain ATCC 19707 / BCRC 17464 / JCM 30415 / NCIMB 11848 / C-107).